We begin with the raw amino-acid sequence, 782 residues long: Host cell factor homolog hcf-1 (782 aa).

Residues 1–25 form a disordered region; it reads MDEDVGLEATNYSRGDESRSEEQEK. Over residues 14 to 25 the composition is skewed to basic and acidic residues; sequence RGDESRSEEQEK. 5 Kelch repeats span residues 55–103, 105–151, 161–222, 227–271, and 280–324; these read LIVI…SLGN, IYRF…RIGH, KAYV…IYEK, RMVV…PRSL, and KMFV…VPLH. A phosphoserine mark is found at S423, S431, and S449. The span at 423-434 shows a compositional bias: polar residues; it reads SPIKRATTSPRK. The disordered stretch occupies residues 423-553; it reads SPIKRATTSP…EENGDDDLPW (131 aa). Polar residues-rich tracts occupy residues 456-469 and 496-513; these read TAPS…TTYT and TASP…SSTC. Position 498 is a phosphoserine (S498). Residues 537-552 show a composition bias toward acidic residues; it reads GETDEMKEENGDDDLP.

Interacts with daf-16/FOXO. Interacts with deacetylase sir-2.1. Interacts with the 14-3-3 family proteins ftt-2 and par-5. Phosphorylated at multiple serine residues. Phosphorylation is developmentally regulated, occurring in embryos but not L1 larvae. Phosphorylation may be cell-cycle-regulated.

Its subcellular location is the nucleus. Its function is as follows. Transcriptional coregulator. Involved in control of the cell cycle and in modulating mitotic histone phosphorylation. Plays a role in modulating lifespan by regulating the transcriptional activity of daf-16/Forkhead box protein O, in concert with protein deacetylase sir-2.1/SIRT1, and perhaps acting independently of the Insulin/IGF-1-like signaling (IIS) mediated pathway. Negatively modulates responses to environmental stresses, including oxidative stress, heat stress, and exposure to heavy metals; acting via regulation of the transcription factors daf-16 and skn-1. May play a role in pharyngeal development via positive modulation of expression of sup-35. This Caenorhabditis elegans protein is Host cell factor homolog hcf-1.